Reading from the N-terminus, the 327-residue chain is Endo-1,4-beta-xylanase C (327 aa).

Positions 1-15 (MKFSSLLFTASLVAA) are cleaved as a signal peptide. The GH10 domain occupies 43–325 (TITDPNLLQS…KPAYTAVVNA (283 aa)). E154 acts as the Proton donor in catalysis. E262 serves as the catalytic Nucleophile. C280 and C286 are oxidised to a cystine.

Belongs to the glycosyl hydrolase 10 (cellulase F) family.

It localises to the secreted. It carries out the reaction Endohydrolysis of (1-&gt;4)-beta-D-xylosidic linkages in xylans.. It participates in glycan degradation; xylan degradation. Its activity is regulated as follows. Weakly inhibited by the wheat xylanase inhibiting protein I (XIP-I). Functionally, endo-1,4-beta-xylanase involved in the hydrolysis of xylan, a major structural heterogeneous polysaccharide found in plant biomass representing the second most abundant polysaccharide in the biosphere, after cellulose. Plays an important role in causing fusarium head blight (FHB) on cereal crops. The chain is Endo-1,4-beta-xylanase C (XYLC) from Gibberella zeae (strain ATCC MYA-4620 / CBS 123657 / FGSC 9075 / NRRL 31084 / PH-1) (Wheat head blight fungus).